Reading from the N-terminus, the 225-residue chain is Membrane-spanning 4-domains subfamily A member 4D (225 aa).

Residues 1 to 42 (MQGLAQTTMAVVPGGAPPSENSVIKSQMWNKNKEKFLKGEPK) are Cytoplasmic-facing. The chain crosses the membrane as a helical span at residues 43 to 63 (VLGAIQVMIAFINFSLGIIII). The Extracellular portion of the chain corresponds to 64-73 (LNRVSERFMS). Residues 74–94 (VLLLAPFWGSIMFIFSGSLSI) traverse the membrane as a helical segment. The Cytoplasmic portion of the chain corresponds to 95–113 (AAGVKPTKAMIISSLSVNT). Residues 114–134 (ISSVLAVAASIIGVISVISGV) form a helical membrane-spanning segment. Residues 135–148 (FRQFRSQPAIASLD) lie on the Extracellular side of the membrane. A helical transmembrane segment spans residues 149 to 169 (VLMTILNMLEFCIAVSVSAFG). The Cytoplasmic segment spans residues 170–225 (CKASCCNSSEVLVVLPSNSAVTVTAPPMILQPLPPSECQGKNVPENLYRNQPGEIV).

It belongs to the MS4A family. Expressed in thymus, spleen, peripheral lymph node, liver, kidney, heart, colon, lung, and testes.

Its subcellular location is the membrane. Functionally, may be involved in signal transduction as a component of a multimeric receptor complex. This is Membrane-spanning 4-domains subfamily A member 4D (Ms4a4d) from Mus musculus (Mouse).